We begin with the raw amino-acid sequence, 236 residues long: Mammalian ependymin-related protein 1 (236 aa).

The signal sequence occupies residues 1 to 35 (MPRRAPLRVARGSLDAWLLGGLWVCALGCLCGVGM). 3 disulfide bridges follow: cysteine 54/cysteine 184, cysteine 100/cysteine 234, and cysteine 125/cysteine 222. N-linked (GlcNAc...) asparagine glycans are attached at residues asparagine 142 and asparagine 194.

The protein belongs to the ependymin family. As to quaternary structure, homodimer. In terms of processing, N-glycosylated; the glycan contains mannose-6-phosphate moieties.

Its subcellular location is the lysosome lumen. It localises to the secreted. In terms of biological role, binds anionic lipids and gangliosides at acidic pH. The polypeptide is Mammalian ependymin-related protein 1 (EPDR1) (Bos taurus (Bovine)).